We begin with the raw amino-acid sequence, 384 residues long: MAKHLFTSESVSEGHPDKIADQISDAVLDAILEQDPKARVACETYVKTGMVLVGGEITTSAWVDIEEITRNTVREIGYVHSDMGFDANSCAVLSAIGKQSPDINQGVDRTDPLEQGAGDQGLMFGYATNETDVLMPAPVTYAHRLVQRQAEVRKNGTLPWLRPDAKSQVTFQYDGGKIVGIDAVVLSTQHAEDIEQNVLHDAVMEEIIKPVLPAEWLNESTKYFINPTGRFVIGGPMGDCGLTGRKIIVDTYGGMARHGGGAFSGKDPSKVDRSAAYAARYVAKNIVAAGLADRCEIQVSYAIGVAEPTSIMVETFGTEKIATEQLTLLVREFFDLRPYGLIQMLDLLHPIYKETAAYGHFGREHFPWEKTDKAQLLRDAAGLK.

Histidine 15 contacts ATP. Mg(2+) is bound at residue aspartate 17. Glutamate 43 lines the K(+) pocket. L-methionine is bound by residues glutamate 56 and glutamine 99. Residues 99 to 109 (QSPDINQGVDR) form a flexible loop region. ATP contacts are provided by residues 164 to 166 (DAK), 230 to 231 (RF), aspartate 239, 245 to 246 (RK), alanine 262, and lysine 266. Aspartate 239 provides a ligand contact to L-methionine. Lysine 270 is a binding site for L-methionine.

This sequence belongs to the AdoMet synthase family. In terms of assembly, homotetramer; dimer of dimers. Mg(2+) is required as a cofactor. Requires K(+) as cofactor.

It is found in the cytoplasm. It carries out the reaction L-methionine + ATP + H2O = S-adenosyl-L-methionine + phosphate + diphosphate. It functions in the pathway amino-acid biosynthesis; S-adenosyl-L-methionine biosynthesis; S-adenosyl-L-methionine from L-methionine: step 1/1. Its function is as follows. Catalyzes the formation of S-adenosylmethionine (AdoMet) from methionine and ATP. The overall synthetic reaction is composed of two sequential steps, AdoMet formation and the subsequent tripolyphosphate hydrolysis which occurs prior to release of AdoMet from the enzyme. This chain is S-adenosylmethionine synthase, found in Cronobacter sakazakii (strain ATCC BAA-894) (Enterobacter sakazakii).